The chain runs to 276 residues: Radial spoke head protein 9 homolog (276 aa).

The protein belongs to the flagellar radial spoke RSP9 family. As to quaternary structure, component of the axonemal radial spoke 1 (RS1) and 2 (RS2) complexes, at least composed of spoke head proteins RSPH1, RSPH3, RSPH9 and the cilia-specific component RSPH4A or sperm-specific component RSPH6A, spoke stalk proteins RSPH14, DNAJB13, DYDC1, ROPN1L and NME5, and the RS1 complex-specific anchor protein IQUB. Interacts with IQUB. Interacts with RSPH3B. Interacts with RSPH4A. Interacts with RSPH6A. Interacts with CFAP61. Interacts with LRRC23. In terms of tissue distribution, expressed in the testis, trachea, lung, oviduct and ependymal cells (at protein level).

The protein localises to the cytoplasm. Its subcellular location is the cytoskeleton. It localises to the cilium axoneme. It is found in the flagellum axoneme. The protein resides in the cell projection. The protein localises to the kinocilium. Functions as part of axonemal radial spoke complexes that play an important part in the motility of sperm and cilia. Essential for both the radial spoke head assembly and the central pair microtubule stability in ependymal motile cilia. Required for motility of olfactory and neural cilia and for the structural integrity of ciliary axonemes in both 9+0 and 9+2 motile cilia. This Mus musculus (Mouse) protein is Radial spoke head protein 9 homolog (Rsph9).